A 2697-amino-acid polypeptide reads, in one-letter code: Target of rapamycin homolog (2697 aa).

Residues 1–25 (MLQQHGISFQMNADRQNKAATTSNR) are disordered. HEAT repeat units follow at residues 235-272 (LRVN…IVSQ), 649-687 (QTIY…PFLA), 689-726 (LAQP…LNPA), 731-768 (RLRL…QSPK), 815-853 (KNLK…STAY), 863-900 (SLLD…YTHK), and 1073-1110 (KYTG…LTHC). The 716-residue stretch at 1438-2153 (VLGRWAEQTK…IYALTVASRS (716 aa)) folds into the FAT domain. 2 disordered regions span residues 1945–1981 (TVIS…PQPA) and 2017–2039 (SNSS…PSNS). The span at 1969 to 1981 (SPPPPAQKSPQPA) shows a compositional bias: pro residues. Polar residues predominate over residues 2030–2039 (PLSNDSPSNS). Residues 2332 to 2647 (FSSKMNVITS…TTDSIMETIK (316 aa)) form the PI3K/PI4K catalytic domain. The G-loop stretch occupies residues 2338–2344 (VITSKQR). A catalytic loop region spans residues 2512 to 2520 (GLGDRHPSN). An activation loop region spans residues 2532 to 2557 (HIDFGDCFEVAMLREKFPERVPFRLT). A disordered region spans residues 2615-2635 (DPKTRKDTGGRQNMAGAVLPS). The 33-residue stretch at 2665 to 2697 (EPLQVTEQLAMLTEQATSPLNLCQSYIGWCPFW) folds into the FATC domain.

It belongs to the PI3/PI4-kinase family. In terms of tissue distribution, ubiquitous. Expressed in all major tissues and organs, including the intestine, gonads and hypodermal cells. Expressed in neurons.

Its subcellular location is the nucleus. The enzyme catalyses L-seryl-[protein] + ATP = O-phospho-L-seryl-[protein] + ADP + H(+). It catalyses the reaction L-threonyl-[protein] + ATP = O-phospho-L-threonyl-[protein] + ADP + H(+). Its function is as follows. Serine/threonine-protein kinase that regulates the mRNA translation machinery, probably by modulating the activity of translation factors such as eIF-4G and eIF-2. It may have some protein kinase activity instead of lipid kinase activity. May play a role in P-granule degradation by autophagy in somatic cells during embryogenesis. Required, during larval development, for the establishment of the proper number of germline progenitors, probably upstream of rsks-1 and ife-1. Required for larval development. May act as a mediator of lifespan regulation by insulin signaling and nutrient sensing. The chain is Target of rapamycin homolog from Caenorhabditis elegans.